The sequence spans 151 residues: Ubiquitin-conjugating enzyme E2 2 (151 aa).

The 147-residue stretch at 4–150 folds into the UBC core domain; sequence AARRRLMRDF…VRETVEKSWE (147 aa). Cys88 (glycyl thioester intermediate) is an active-site residue.

The protein belongs to the ubiquitin-conjugating enzyme family.

It localises to the cytoplasm. It is found in the nucleus. It catalyses the reaction S-ubiquitinyl-[E1 ubiquitin-activating enzyme]-L-cysteine + [E2 ubiquitin-conjugating enzyme]-L-cysteine = [E1 ubiquitin-activating enzyme]-L-cysteine + S-ubiquitinyl-[E2 ubiquitin-conjugating enzyme]-L-cysteine.. It participates in protein modification; protein ubiquitination. Its function is as follows. Catalyzes the covalent attachment of ubiquitin to other proteins. Plays a role in transcription regulation by catalyzing the monoubiquitination of histone H2B to form H2BK123ub1. H2BK123ub1 gives a specific tag for epigenetic transcriptional activation and is also a prerequisite for H3K4me and H3K79me formation. Also involved in postreplication repair of UV-damaged DNA, in N-end rule-dependent protein degradation and in sporulation. The chain is Ubiquitin-conjugating enzyme E2 2 (mus-8) from Neurospora crassa (strain ATCC 24698 / 74-OR23-1A / CBS 708.71 / DSM 1257 / FGSC 987).